Consider the following 202-residue polypeptide: Putative pre-16S rRNA nuclease (202 aa).

Disordered regions lie at residues 1–27 and 170–202; these read MSGS…GVRI and GCAA…SDER. Positions 9–20 are enriched in basic and acidic residues; that stretch reads GDSRPGDSRPGD.

Belongs to the YqgF nuclease family.

It localises to the cytoplasm. In terms of biological role, could be a nuclease involved in processing of the 5'-end of pre-16S rRNA. This Frankia casuarinae (strain DSM 45818 / CECT 9043 / HFP020203 / CcI3) protein is Putative pre-16S rRNA nuclease.